Reading from the N-terminus, the 90-residue chain is Small ribosomal subunit protein uS17 (90 aa).

The protein belongs to the universal ribosomal protein uS17 family. As to quaternary structure, part of the 30S ribosomal subunit.

One of the primary rRNA binding proteins, it binds specifically to the 5'-end of 16S ribosomal RNA. The polypeptide is Small ribosomal subunit protein uS17 (Paraburkholderia phytofirmans (strain DSM 17436 / LMG 22146 / PsJN) (Burkholderia phytofirmans)).